Here is a 176-residue protein sequence, read N- to C-terminus: MAIRLEDKKAIVAEVNETASKALSLVIADYRGVTSNKMSELRAKARAESVSLRVVRNTLARRAVEGTEYECAREAFVGPTILAFSMEDPGAAARLLKDYAKENDKFEIKALAVGGEMLGADQIDRLAKLPTRDQALAMLMSVMQAPVTKLARTLNEIPSKVTRAVAAVRDKKQEAA.

Belongs to the universal ribosomal protein uL10 family. As to quaternary structure, part of the ribosomal stalk of the 50S ribosomal subunit. The N-terminus interacts with L11 and the large rRNA to form the base of the stalk. The C-terminus forms an elongated spine to which L12 dimers bind in a sequential fashion forming a multimeric L10(L12)X complex.

In terms of biological role, forms part of the ribosomal stalk, playing a central role in the interaction of the ribosome with GTP-bound translation factors. This Hahella chejuensis (strain KCTC 2396) protein is Large ribosomal subunit protein uL10.